Here is a 267-residue protein sequence, read N- to C-terminus: Chlorophyll a-b binding protein 3A, chloroplastic (267 aa).

A chloroplast-targeting transit peptide spans 1-34 (MAASTMALSSSTFAGKTVKLAPSSSEITGNGRIT). The helical transmembrane segment at 153–173 (LVHAQSILAIWACQVVLMGAV) threads the bilayer. The chlorophyll b site is built by Val-154, Ser-158, Gln-166, Glu-174, Arg-177, and Leu-183. 7 residues coordinate chlorophyll a: Lys-214, Glu-215, Asn-218, Arg-220, Gln-232, His-247, and Ala-256. The helical transmembrane segment at 221 to 241 (LAMFSMFGFFVQAIVTGKGPL) threads the bilayer. Residue Phe-263 participates in chlorophyll b binding.

The protein belongs to the light-harvesting chlorophyll a/b-binding (LHC) protein family. In terms of assembly, the LHC complex consists of chlorophyll a-b binding proteins. It depends on Binds at least 14 chlorophylls (8 Chl-a and 6 Chl-b) and carotenoids such as lutein and neoxanthin. as a cofactor. In terms of processing, photoregulated by reversible phosphorylation of its threonine residues.

It is found in the plastid. The protein localises to the chloroplast thylakoid membrane. The light-harvesting complex (LHC) functions as a light receptor, it captures and delivers excitation energy to photosystems with which it is closely associated. This is Chlorophyll a-b binding protein 3A, chloroplastic (CAB3A) from Solanum lycopersicum (Tomato).